The primary structure comprises 213 residues: uncharacterized protein (213 aa).

The CS domain occupies 2-91 (SRHPEVKWAQ…AEAKWWKKLV (90 aa)). The segment at 168–213 (GMGGMGGMDEFEDESDDEEEVSKPQDAEKAAEAGKSQESDAKAETS) is disordered. Over residues 176-187 (DEFEDESDDEEE) the composition is skewed to acidic residues. The span at 188-213 (VSKPQDAEKAAEAGKSQESDAKAETS) shows a compositional bias: basic and acidic residues.

The protein belongs to the p23/wos2 family.

This is an uncharacterized protein from Oryza sativa subsp. japonica (Rice).